The chain runs to 359 residues: Peptide chain release factor 1 (359 aa).

Q235 bears the N5-methylglutamine mark. The disordered stretch occupies residues Q283–Y309.

Belongs to the prokaryotic/mitochondrial release factor family. Methylated by PrmC. Methylation increases the termination efficiency of RF1.

The protein localises to the cytoplasm. Peptide chain release factor 1 directs the termination of translation in response to the peptide chain termination codons UAG and UAA. This Brucella canis (strain ATCC 23365 / NCTC 10854 / RM-666) protein is Peptide chain release factor 1.